Consider the following 192-residue polypeptide: Nucleoside triphosphate pyrophosphatase (192 aa).

Asp-73 serves as the catalytic Proton acceptor.

It belongs to the Maf family. A divalent metal cation serves as cofactor.

Its subcellular location is the cytoplasm. It carries out the reaction a ribonucleoside 5'-triphosphate + H2O = a ribonucleoside 5'-phosphate + diphosphate + H(+). It catalyses the reaction a 2'-deoxyribonucleoside 5'-triphosphate + H2O = a 2'-deoxyribonucleoside 5'-phosphate + diphosphate + H(+). Nucleoside triphosphate pyrophosphatase. May have a dual role in cell division arrest and in preventing the incorporation of modified nucleotides into cellular nucleic acids. The sequence is that of Nucleoside triphosphate pyrophosphatase from Ehrlichia ruminantium (strain Welgevonden).